Here is a 529-residue protein sequence, read N- to C-terminus: Pre-rRNA-processing protein pro-1 (529 aa).

WD repeat units lie at residues 136–175 (AHYQ…SADR) and 287–326 (GHSD…CLKV). Residues 416–518 (ARNEAAKAEK…LKEINKQMYE (103 aa)) adopt a coiled-coil conformation. Residues 436–470 (TLGDDEDDAPEVGNQRRKSGKKNKKNRKNQKKNDF) are disordered. Basic residues predominate over residues 450 to 465 (QRRKSGKKNKKNRKNQ).

Belongs to the WD repeat IPI3/WDR18 family. In terms of assembly, component of the PELP1 complex, composed of at least PELP1, TEX10 and WDR18. The complex interacts with pre-60S ribosome particles.

Its subcellular location is the nucleus. The protein localises to the nucleolus. The protein resides in the nucleoplasm. Functionally, component of the PELP1 complex involved in the nucleolar steps of 28S rRNA maturation and the subsequent nucleoplasmic transit of the pre-60S ribosomal subunit. Required for processing ITS2 sequences from rRNA intermediates during 26S rRNA maturation. Required in the soma to promote normal proliferation and prevent germline tumor formation. The sequence is that of Pre-rRNA-processing protein pro-1 from Caenorhabditis elegans.